Reading from the N-terminus, the 224-residue chain is 7-cyano-7-deazaguanine synthase (224 aa).

An ATP-binding site is contributed by 12–22 (LSGGLDSSTVT). Zn(2+) contacts are provided by Cys-193, Cys-201, Cys-204, and Cys-207.

The protein belongs to the QueC family. Zn(2+) is required as a cofactor.

The enzyme catalyses 7-carboxy-7-deazaguanine + NH4(+) + ATP = 7-cyano-7-deazaguanine + ADP + phosphate + H2O + H(+). It functions in the pathway purine metabolism; 7-cyano-7-deazaguanine biosynthesis. In terms of biological role, catalyzes the ATP-dependent conversion of 7-carboxy-7-deazaguanine (CDG) to 7-cyano-7-deazaguanine (preQ(0)). This chain is 7-cyano-7-deazaguanine synthase, found in Prochlorococcus marinus (strain MIT 9215).